We begin with the raw amino-acid sequence, 847 residues long: Alanine--tRNA ligase (847 aa).

Zn(2+) is bound by residues H554, H558, C656, and H660.

Belongs to the class-II aminoacyl-tRNA synthetase family. It depends on Zn(2+) as a cofactor.

The protein resides in the cytoplasm. It carries out the reaction tRNA(Ala) + L-alanine + ATP = L-alanyl-tRNA(Ala) + AMP + diphosphate. Its function is as follows. Catalyzes the attachment of alanine to tRNA(Ala) in a two-step reaction: alanine is first activated by ATP to form Ala-AMP and then transferred to the acceptor end of tRNA(Ala). Also edits incorrectly charged Ser-tRNA(Ala) and Gly-tRNA(Ala) via its editing domain. The sequence is that of Alanine--tRNA ligase from Helicobacter pylori (strain J99 / ATCC 700824) (Campylobacter pylori J99).